A 380-amino-acid polypeptide reads, in one-letter code: Heme A synthase (380 aa).

8 helical membrane passes run 36–56 (IRAW…VGGL), 125–145 (VIGL…KIPA), 151–171 (LILP…MVAS), 187–207 (LATH…SILQ), 227–247 (FGLA…GALV), 287–307 (LVQF…VMVW), 320–340 (FAFN…IVTV), and 344–364 (APWQ…VLIL). H292 is a heme binding site. H352 is a binding site for heme.

Belongs to the COX15/CtaA family. Type 2 subfamily. In terms of assembly, interacts with CtaB. It depends on heme b as a cofactor.

The protein resides in the cell membrane. It carries out the reaction Fe(II)-heme o + 2 A + H2O = Fe(II)-heme a + 2 AH2. It functions in the pathway porphyrin-containing compound metabolism; heme A biosynthesis; heme A from heme O: step 1/1. Catalyzes the conversion of heme O to heme A by two successive hydroxylations of the methyl group at C8. The first hydroxylation forms heme I, the second hydroxylation results in an unstable dihydroxymethyl group, which spontaneously dehydrates, resulting in the formyl group of heme A. In Ruegeria pomeroyi (strain ATCC 700808 / DSM 15171 / DSS-3) (Silicibacter pomeroyi), this protein is Heme A synthase.